A 181-amino-acid chain; its full sequence is Large ribosomal subunit protein uL6 (181 aa).

This sequence belongs to the universal ribosomal protein uL6 family. As to quaternary structure, part of the 50S ribosomal subunit.

Its function is as follows. This protein binds to the 23S rRNA, and is important in its secondary structure. It is located near the subunit interface in the base of the L7/L12 stalk, and near the tRNA binding site of the peptidyltransferase center. In Coprothermobacter proteolyticus (strain ATCC 35245 / DSM 5265 / OCM 4 / BT), this protein is Large ribosomal subunit protein uL6.